Reading from the N-terminus, the 600-residue chain is Aspartate--tRNA(Asp/Asn) ligase (600 aa).

Position 174 (E174) interacts with L-aspartate. Positions Q198–K201 are aspartate. R220 provides a ligand contact to L-aspartate. ATP contacts are provided by residues R220–E222 and Q229. An L-aspartate-binding site is contributed by H457. Residue E491 participates in ATP binding. R498 provides a ligand contact to L-aspartate. An ATP-binding site is contributed by G543–R546.

This sequence belongs to the class-II aminoacyl-tRNA synthetase family. Type 1 subfamily. In terms of assembly, homodimer.

It is found in the cytoplasm. It carries out the reaction tRNA(Asx) + L-aspartate + ATP = L-aspartyl-tRNA(Asx) + AMP + diphosphate. Aspartyl-tRNA synthetase with relaxed tRNA specificity since it is able to aspartylate not only its cognate tRNA(Asp) but also tRNA(Asn). Reaction proceeds in two steps: L-aspartate is first activated by ATP to form Asp-AMP and then transferred to the acceptor end of tRNA(Asp/Asn). This chain is Aspartate--tRNA(Asp/Asn) ligase, found in Burkholderia mallei (strain NCTC 10247).